The chain runs to 35 residues: Cytochrome c-550 (35 aa).

Residues Cys-17, Cys-20, and His-21 each contribute to the heme c site.

Post-translationally, binds 1 heme c group covalently per subunit.

Its function is as follows. Monoheme cytochrome which functions as an electron carrier in the reduction of nitrite by membrane vesicles. In Virgibacillus halodenitrificans (Bacillus halodenitrificans), this protein is Cytochrome c-550.